The sequence spans 470 residues: Probable G-protein coupled receptor 152 (470 aa).

The interval 1–25 (MDTTMEADLGATGHRPRTELDDEDS) is disordered. The Extracellular portion of the chain corresponds to 1 to 33 (MDTTMEADLGATGHRPRTELDDEDSYPQGGWDT). The helical transmembrane segment at 34–54 (VFLVALLLLGLPANGLMAWLA) threads the bilayer. The Cytoplasmic segment spans residues 55 to 65 (GSQARHGAGTR). Residues 66 to 86 (LALLLLSLALSDFLFLAAAAF) form a helical membrane-spanning segment. Topologically, residues 87 to 105 (QILEIRHGGHWPLGTAACR) are extracellular. An intrachain disulfide couples Cys-104 to Cys-182. Residues 106-126 (FYYFLWGVSYSSGLFLLAALS) traverse the membrane as a helical segment. The Cytoplasmic segment spans residues 127–148 (LDRCLLALCPHWYPGHRPVRLP). The helical transmembrane segment at 149–169 (LWVCAGVWVLATLFSVPWLVF) threads the bilayer. The Extracellular segment spans residues 170 to 194 (PEAAVWWYDLVICLDFWDSEELSLR). Residues 195 to 215 (MLEVLGGFLPFLLLLVCHVLT) form a helical membrane-spanning segment. The Cytoplasmic segment spans residues 216-257 (QATACRTCHRQQQPAACRGFARVARTILSAYVVLRLPYQLAQ). The chain crosses the membrane as a helical span at residues 258-278 (LLYLAFLWDVYSGYLLWEALV). The Extracellular segment spans residues 279–281 (YSD). A helical transmembrane segment spans residues 282–302 (YLILLNSCLSPFLCLMASADL). Residues 303–470 (RTLLRSVLSS…PEAAPGAGPT (168 aa)) lie on the Cytoplasmic side of the membrane. The disordered stretch occupies residues 322 to 470 (PGSFTPTEPQ…PEAAPGAGPT (149 aa)). Composition is skewed to polar residues over residues 325–335 (FTPTEPQTQLD) and 348–414 (AQSQ…NVQT). Positions 415–425 (PAPAASSVPSP) are enriched in low complexity.

The protein belongs to the G-protein coupled receptor 1 family.

The protein resides in the cell membrane. In terms of biological role, orphan receptor. This chain is Probable G-protein coupled receptor 152 (GPR152), found in Homo sapiens (Human).